Here is a 642-residue protein sequence, read N- to C-terminus: MPVVTLPDGSQRQFDHAVSVMDVACDIGPGLAKACIAGRVNGELVDACELIDSDANLAIITSKDDAGLEIIRHSCAHLLGHAIKQLWPDTKMAIGPIIDNGFYYDVDLGRALTQEDIELLEKRMLELAKKDYDVIKKKVNWQEARDTFVARGEDYKVQILDENISRDDRPGLYNHEEYIDMCRGPHVPNMRFCHHFKLQKVAGAYWRGDSNNKMLQRIYGTAWADKKQLNTYLQRLEEAAKRDHRKIGKQLDLYHMQEEAPGMAFWHNDGWTIFRELETFVRTKLKEYQYQEVKGPFMMDRVMWERTGHWENYGEHMFTTSSENREYCVKPMNCPGHIQIFNQGLKSYRDLPLRMAEFGSCHRNEPSGALHGLMRVRGFTQDDAHIFCTEEQIHREVSSCIKMVYDVYSTFGFEKIVVKLSTRPEKRIGTEEQWNQAEESLAAALQENGVQFEYQPGEGAFYGPKIEFTLHDCLDRAWQCGTVQLDFSLPGRLSASYVGENNERKVPVMIHRAVLGSLERFIGILTEEYAGFFPTWIAPQQVVVMNITDSQADYVQELVKKLQDAGIRAKADLRNEKIGFKIREHTLRRVPYMLVCGEKEVESGKVSVRTRRGKDLGSIDVNGFIEKLLIEIRSRNLHQLEE.

In terms of domain architecture, TGS spans 1-61 (MPVVTLPDGS…DSDANLAIIT (61 aa)). Positions 243-534 (DHRKIGKQLD…LTEEYAGFFP (292 aa)) are catalytic. The Zn(2+) site is built by Cys334, His385, and His511.

This sequence belongs to the class-II aminoacyl-tRNA synthetase family. In terms of assembly, homodimer. Zn(2+) is required as a cofactor.

Its subcellular location is the cytoplasm. It catalyses the reaction tRNA(Thr) + L-threonine + ATP = L-threonyl-tRNA(Thr) + AMP + diphosphate + H(+). Catalyzes the attachment of threonine to tRNA(Thr) in a two-step reaction: L-threonine is first activated by ATP to form Thr-AMP and then transferred to the acceptor end of tRNA(Thr). Also edits incorrectly charged L-seryl-tRNA(Thr). This is Threonine--tRNA ligase from Photorhabdus laumondii subsp. laumondii (strain DSM 15139 / CIP 105565 / TT01) (Photorhabdus luminescens subsp. laumondii).